The primary structure comprises 559 residues: Potassium-transporting ATPase potassium-binding subunit (559 aa).

13 helical membrane-spanning segments follow: residues 5-25, 27-47, 63-83, 132-152, 170-190, 253-273, 283-303, 327-347, 356-376, 379-399, 416-436, 484-504, and 524-544; these read GFLLIASFLLILLVLAKPLGS, LARLIAAVPLPGVAGVERILW, LLALLTLNLLGLGILFCLLFW, GLTVQNFLSAATGIAVVFALI, LVRITLWILFPVALIIALFFI, LAQMLAIFLIPAALCFAFGEA, LLWAMSFIFVVCVAVVMWAEV, FGVLASSLFAVVTTAASCGAV, ALGGMVPMWLMQIGEVVFGGV, GLYGMLLFVLLAVFIAGLMIG, MTALAILVTPMLVLLGSALAM, LLAFCMFVGRFGVIIPVMAIA, and GALFIGLLIGTVLLVGALTFI.

The protein belongs to the KdpA family. In terms of assembly, the system is composed of three essential subunits: KdpA, KdpB and KdpC.

It is found in the cell inner membrane. Functionally, part of the high-affinity ATP-driven potassium transport (or Kdp) system, which catalyzes the hydrolysis of ATP coupled with the electrogenic transport of potassium into the cytoplasm. This subunit binds the periplasmic potassium ions and delivers the ions to the membrane domain of KdpB through an intramembrane tunnel. This is Potassium-transporting ATPase potassium-binding subunit from Salmonella choleraesuis (strain SC-B67).